Here is a 271-residue protein sequence, read N- to C-terminus: Formamidopyrimidine-DNA glycosylase (271 aa).

The Schiff-base intermediate with DNA role is filled by Pro-2. Residue Glu-3 is the Proton donor of the active site. Catalysis depends on Lys-58, which acts as the Proton donor; for beta-elimination activity. 3 residues coordinate DNA: His-91, Arg-110, and Arg-152. An FPG-type zinc finger spans residues Ser-237 to Lys-271. Arg-261 (proton donor; for delta-elimination activity) is an active-site residue.

This sequence belongs to the FPG family. Monomer. Zn(2+) serves as cofactor.

It catalyses the reaction Hydrolysis of DNA containing ring-opened 7-methylguanine residues, releasing 2,6-diamino-4-hydroxy-5-(N-methyl)formamidopyrimidine.. The enzyme catalyses 2'-deoxyribonucleotide-(2'-deoxyribose 5'-phosphate)-2'-deoxyribonucleotide-DNA = a 3'-end 2'-deoxyribonucleotide-(2,3-dehydro-2,3-deoxyribose 5'-phosphate)-DNA + a 5'-end 5'-phospho-2'-deoxyribonucleoside-DNA + H(+). Functionally, involved in base excision repair of DNA damaged by oxidation or by mutagenic agents. Acts as a DNA glycosylase that recognizes and removes damaged bases. Has a preference for oxidized purines, such as 7,8-dihydro-8-oxoguanine (8-oxoG). Has AP (apurinic/apyrimidinic) lyase activity and introduces nicks in the DNA strand. Cleaves the DNA backbone by beta-delta elimination to generate a single-strand break at the site of the removed base with both 3'- and 5'-phosphates. The sequence is that of Formamidopyrimidine-DNA glycosylase from Geotalea daltonii (strain DSM 22248 / JCM 15807 / FRC-32) (Geobacter daltonii).